A 404-amino-acid polypeptide reads, in one-letter code: Glucose-1-phosphate adenylyltransferase (404 aa).

Alpha-D-glucose 1-phosphate is bound by residues Tyr-99, Gly-164, 179-180 (EK), and Ser-197.

It belongs to the bacterial/plant glucose-1-phosphate adenylyltransferase family. Homotetramer.

The catalysed reaction is alpha-D-glucose 1-phosphate + ATP + H(+) = ADP-alpha-D-glucose + diphosphate. The protein operates within glycan biosynthesis; glycogen biosynthesis. Its function is as follows. Involved in the biosynthesis of ADP-glucose, a building block required for the elongation reactions to produce glycogen. Catalyzes the reaction between ATP and alpha-D-glucose 1-phosphate (G1P) to produce pyrophosphate and ADP-Glc. The sequence is that of Glucose-1-phosphate adenylyltransferase from Rhodococcus erythropolis (strain PR4 / NBRC 100887).